Reading from the N-terminus, the 116-residue chain is Large ribosomal subunit protein bL19 (116 aa).

The protein belongs to the bacterial ribosomal protein bL19 family.

In terms of biological role, this protein is located at the 30S-50S ribosomal subunit interface and may play a role in the structure and function of the aminoacyl-tRNA binding site. This chain is Large ribosomal subunit protein bL19, found in Staphylococcus aureus (strain USA300).